The chain runs to 73 residues: Plasticin-A1 (73 aa).

Positions 1 to 22 are cleaved as a signal peptide; sequence MAFLKKSLFLVLFLAIVPLSIC. Positions 23 to 42 are excised as a propeptide; that stretch reads EEEKREEENEEKQEDDDQSE. Residues 25-45 form a disordered region; that stretch reads EKREEENEEKQEDDDQSEKRG. Residues 30–40 are compositionally biased toward acidic residues; it reads ENEEKQEDDDQ. Gly70 is modified (glycine amide). Residues 72–73 constitute a propeptide that is removed on maturation; the sequence is ES.

It belongs to the frog skin active peptide (FSAP) family. Plasticin subfamily. As to expression, expressed by the skin glands.

It localises to the secreted. Its subcellular location is the target cell membrane. Peptide with no antimicrobial activity. May act in synergy with cationic peptides by enhancing their activity. Has a moderate hemolytic activity. In Agalychnis annae (Blue-sided leaf frog), this protein is Plasticin-A1.